Reading from the N-terminus, the 392-residue chain is DNA polymerase IV (392 aa).

A UmuC domain is found at 6-186; that stretch reads IVHLDADAFF…LPIGKLPGVG (181 aa). Residues Asp-10 and Asp-103 each contribute to the Mg(2+) site. The active site involves Glu-104.

The protein belongs to the DNA polymerase type-Y family. In terms of assembly, monomer. The cofactor is Mg(2+).

The protein localises to the cytoplasm. The enzyme catalyses DNA(n) + a 2'-deoxyribonucleoside 5'-triphosphate = DNA(n+1) + diphosphate. In terms of biological role, poorly processive, error-prone DNA polymerase involved in untargeted mutagenesis. Copies undamaged DNA at stalled replication forks, which arise in vivo from mismatched or misaligned primer ends. These misaligned primers can be extended by PolIV. Exhibits no 3'-5' exonuclease (proofreading) activity. May be involved in translesional synthesis, in conjunction with the beta clamp from PolIII. This is DNA polymerase IV from Opitutus terrae (strain DSM 11246 / JCM 15787 / PB90-1).